The chain runs to 98 residues: U1-theraphotoxin-Ap1a (98 aa).

An N-terminal signal peptide occupies residues 1-23 (MRSLTLAAVLACSLLLVFHTSAA). The propeptide occupies 24 to 50 (EELEVQDGHLMNPGDGDTALATVDDER). Cystine bridges form between C54–C84, C58–C90, and C72–C95. The disordered stretch occupies residues 63–84 (DGKSKEGKPCKPKGDKNKDKKC).

Belongs to the neurotoxin 12 (Hwtx-2) family. 01 (Ap1a) subfamily. As to expression, expressed by the venom gland.

It is found in the secreted. Functionally, is toxic to both insects and mammals. Induces reversible paralysis when injected into S.frugiperda larvae. Reduces both the amplitude and frequency of responses from muscle (GF-TTM and GF-DLM) pathways in the D.melanogaster giant fiber circuit, suggesting an action at the neuromuscular junction, which is mediated by glutamatergic receptors. In mice, intracranial injection of 30 ug causes increased urination, myoclonus, hypermotility with circular movements followed by respiratory and generalized seizures resulting in death within 25-35 minutes of injection. The polypeptide is U1-theraphotoxin-Ap1a (Acanthoscurria paulensis (Brazilian giant black tarantula spider)).